Consider the following 146-residue polypeptide: Small ribosomal subunit protein bS6 (146 aa).

The disordered stretch occupies residues 100 to 146; sequence QSAMMRKRDDDDRGDRPDRGDRGRGPRPDRPPRRPRDDAAASDEGGF. Positions 105–138 are enriched in basic and acidic residues; that stretch reads RKRDDDDRGDRPDRGDRGRGPRPDRPPRRPRDDA.

Belongs to the bacterial ribosomal protein bS6 family.

Binds together with bS18 to 16S ribosomal RNA. This Methylocella silvestris (strain DSM 15510 / CIP 108128 / LMG 27833 / NCIMB 13906 / BL2) protein is Small ribosomal subunit protein bS6.